The following is a 601-amino-acid chain: Adenine deaminase (601 aa).

Belongs to the metallo-dependent hydrolases superfamily. Adenine deaminase family. Mn(2+) serves as cofactor.

The catalysed reaction is adenine + H2O + H(+) = hypoxanthine + NH4(+). This is Adenine deaminase from Ruegeria sp. (strain TM1040) (Silicibacter sp.).